Consider the following 157-residue polypeptide: SsrA-binding protein (157 aa).

Positions 132–157 (EHDKRDTIKEREGKREVERAMKSRHR) are disordered.

It belongs to the SmpB family.

The protein resides in the cytoplasm. Its function is as follows. Required for rescue of stalled ribosomes mediated by trans-translation. Binds to transfer-messenger RNA (tmRNA), required for stable association of tmRNA with ribosomes. tmRNA and SmpB together mimic tRNA shape, replacing the anticodon stem-loop with SmpB. tmRNA is encoded by the ssrA gene; the 2 termini fold to resemble tRNA(Ala) and it encodes a 'tag peptide', a short internal open reading frame. During trans-translation Ala-aminoacylated tmRNA acts like a tRNA, entering the A-site of stalled ribosomes, displacing the stalled mRNA. The ribosome then switches to translate the ORF on the tmRNA; the nascent peptide is terminated with the 'tag peptide' encoded by the tmRNA and targeted for degradation. The ribosome is freed to recommence translation, which seems to be the essential function of trans-translation. This is SsrA-binding protein from Paracidovorax citrulli (strain AAC00-1) (Acidovorax citrulli).